The chain runs to 83 residues: Exodeoxyribonuclease 7 small subunit (83 aa).

It belongs to the XseB family. In terms of assembly, heterooligomer composed of large and small subunits.

The protein localises to the cytoplasm. The catalysed reaction is Exonucleolytic cleavage in either 5'- to 3'- or 3'- to 5'-direction to yield nucleoside 5'-phosphates.. Its function is as follows. Bidirectionally degrades single-stranded DNA into large acid-insoluble oligonucleotides, which are then degraded further into small acid-soluble oligonucleotides. In Rhizobium rhizogenes (strain K84 / ATCC BAA-868) (Agrobacterium radiobacter), this protein is Exodeoxyribonuclease 7 small subunit.